The primary structure comprises 234 residues: MTAQLQPYQREFIEFAIDEGVLKFGEFTLKSGRISPYFFNAGLFKSGRALARLGRFYAQAIAHSGLEADVLFGPAYKGIPLATTTAVALADHHDRDLPFAFNRKEAKAHGEGGNIVGAALAGRVLIIDDVITAGTAIREVMQLIDAAGAEAAGVVIALDRQERGQDENGLKAQSAIQEVTSQYGMPVVSIVTLDQVLAYLETRQSQGDESDQSLRQHADAIRAYRDRYGVRLDG.

K30 is a 5-phospho-alpha-D-ribose 1-diphosphate binding site. F38–F39 is an orotate binding site. Residues Y76–K77, R103, K104, K107, H109, and D128–A136 contribute to the 5-phospho-alpha-D-ribose 1-diphosphate site. Positions 132 and 160 each coordinate orotate.

Belongs to the purine/pyrimidine phosphoribosyltransferase family. PyrE subfamily. Homodimer. The cofactor is Mg(2+).

It catalyses the reaction orotidine 5'-phosphate + diphosphate = orotate + 5-phospho-alpha-D-ribose 1-diphosphate. Its pathway is pyrimidine metabolism; UMP biosynthesis via de novo pathway; UMP from orotate: step 1/2. Its function is as follows. Catalyzes the transfer of a ribosyl phosphate group from 5-phosphoribose 1-diphosphate to orotate, leading to the formation of orotidine monophosphate (OMP). The sequence is that of Orotate phosphoribosyltransferase from Chromohalobacter salexigens (strain ATCC BAA-138 / DSM 3043 / CIP 106854 / NCIMB 13768 / 1H11).